The sequence spans 361 residues: Phosphoserine aminotransferase (361 aa).

R42 contributes to the L-glutamate binding site. Pyridoxal 5'-phosphate contacts are provided by residues 76–77 (AS), W102, T152, D172, and Q195. N6-(pyridoxal phosphate)lysine is present on K196. 237-238 (NT) provides a ligand contact to pyridoxal 5'-phosphate.

Belongs to the class-V pyridoxal-phosphate-dependent aminotransferase family. SerC subfamily. Homodimer. Requires pyridoxal 5'-phosphate as cofactor.

The protein resides in the cytoplasm. It catalyses the reaction O-phospho-L-serine + 2-oxoglutarate = 3-phosphooxypyruvate + L-glutamate. The enzyme catalyses 4-(phosphooxy)-L-threonine + 2-oxoglutarate = (R)-3-hydroxy-2-oxo-4-phosphooxybutanoate + L-glutamate. Its pathway is amino-acid biosynthesis; L-serine biosynthesis; L-serine from 3-phospho-D-glycerate: step 2/3. Functionally, catalyzes the reversible conversion of 3-phosphohydroxypyruvate to phosphoserine and of 3-hydroxy-2-oxo-4-phosphonooxybutanoate to phosphohydroxythreonine. In Halalkalibacterium halodurans (strain ATCC BAA-125 / DSM 18197 / FERM 7344 / JCM 9153 / C-125) (Bacillus halodurans), this protein is Phosphoserine aminotransferase.